We begin with the raw amino-acid sequence, 1330 residues long: ESX-3 secretion system protein EccC3 (1330 aa).

2 consecutive transmembrane segments (helical) span residues 43 to 63 (LPYLIGILIVGMIVALVATGM) and 65 to 85 (VISPQTLFFPFVLLLAATALY). FtsK domains lie at 456–662 (GEPL…SVSR), 811–1000 (RDPL…RDSN), and 1090–1280 (LAPV…ADSG). ATP-binding positions include 479–486 (GMTGSGKS), 829–836 (GGPKSGKS), and 1107–1114 (GDARSGKT).

As to quaternary structure, part of the ESX-3 / type VII secretion system (T7SS), which is composed of cytosolic and membrane components. The ESX-3 membrane complex is composed of EccB3, EccC3, EccD3 and EccE3.

The protein resides in the cell inner membrane. Part of the ESX-3 specialized secretion system, which is important for iron and zinc uptake or homeostasis. The chain is ESX-3 secretion system protein EccC3 from Mycobacterium tuberculosis (strain ATCC 25618 / H37Rv).